Consider the following 261-residue polypeptide: Bidirectional sugar transporter SWEET1b (261 aa).

Over 1–6 (MEDLAK) the chain is Extracellular. The helical transmembrane segment at 7-27 (FLFGVSGNVIALFLFLSPVPT) threads the bilayer. The 89-residue stretch at 7–95 (FLFGVSGNVI…VVFLVFASTH (89 aa)) folds into the MtN3/slv 1 domain. The Cytoplasmic segment spans residues 28 to 42 (FWRIIRRKSTEDFSG). The chain crosses the membrane as a helical span at residues 43–63 (VPYNMTLINCLLSAWYGLPFV). The Extracellular portion of the chain corresponds to 64 to 71 (SPNNILVS). A helical membrane pass occupies residues 72 to 92 (TINGAGAVIETAYVVVFLVFA). Residues 93–101 (STHKTRLRT) lie on the Cytoplasmic side of the membrane. Residues 102 to 122 (LGLAAAVASVFAAVALVSLLA) traverse the membrane as a helical segment. Residues 123 to 129 (LHGQHRK) lie on the Extracellular side of the membrane. A helical transmembrane segment spans residues 130–150 (LLCGVAATVCSICMYASPLSI). In terms of domain architecture, MtN3/slv 2 spans 133–215 (GVAATVCSIC…VLYAIYRNNK (83 aa)). Residues 151–164 (MRLVIKTKSVEYMP) are Cytoplasmic-facing. A helical membrane pass occupies residues 165-185 (FLLSLAVFLCGTSWFIYGLLG). At 186-189 (RDPF) the chain is on the extracellular side. A helical membrane pass occupies residues 190-210 (VTIPNGCGSFLGAVQLVLYAI). Topologically, residues 211–261 (YRNNKGAGGGSGGKQAGDDDVEMAEGRNNKVADGGAAEDDSTAGGKAGTEV) are cytoplasmic. Positions 218-261 (GGGSGGKQAGDDDVEMAEGRNNKVADGGAAEDDSTAGGKAGTEV) are disordered.

This sequence belongs to the SWEET sugar transporter family. As to quaternary structure, forms homodimers.

The protein resides in the cell membrane. It carries out the reaction D-glucose(out) = D-glucose(in). The catalysed reaction is D-galactose(in) = D-galactose(out). Mediates transport of sugars across the plasma membrane. Can transport glucose and galactose, but not fructose, mannose and sucrose. This Oryza sativa subsp. indica (Rice) protein is Bidirectional sugar transporter SWEET1b (SWEET1B).